The following is a 419-amino-acid chain: Serine hydroxymethyltransferase (419 aa).

Residues L121 and 125–127 (GHL) each bind (6S)-5,6,7,8-tetrahydrofolate. K229 carries the post-translational modification N6-(pyridoxal phosphate)lysine.

The protein belongs to the SHMT family. Homodimer. Requires pyridoxal 5'-phosphate as cofactor.

It is found in the cytoplasm. The enzyme catalyses (6R)-5,10-methylene-5,6,7,8-tetrahydrofolate + glycine + H2O = (6S)-5,6,7,8-tetrahydrofolate + L-serine. The protein operates within one-carbon metabolism; tetrahydrofolate interconversion. It participates in amino-acid biosynthesis; glycine biosynthesis; glycine from L-serine: step 1/1. Its function is as follows. Catalyzes the reversible interconversion of serine and glycine with tetrahydrofolate (THF) serving as the one-carbon carrier. This reaction serves as the major source of one-carbon groups required for the biosynthesis of purines, thymidylate, methionine, and other important biomolecules. Also exhibits THF-independent aldolase activity toward beta-hydroxyamino acids, producing glycine and aldehydes, via a retro-aldol mechanism. This is Serine hydroxymethyltransferase from Histophilus somni (strain 2336) (Haemophilus somnus).